Reading from the N-terminus, the 136-residue chain is 6,7-dimethyl-8-ribityllumazine synthase (136 aa).

5-amino-6-(D-ribitylamino)uracil contacts are provided by residues F11, 43-45, and 67-69; these read VYD and CVI. A (2S)-2-hydroxy-3-oxobutyl phosphate-binding site is contributed by 72-73; the sequence is DT. The Proton donor role is filled by H75. L100 provides a ligand contact to 5-amino-6-(D-ribitylamino)uracil. R115 is a binding site for (2S)-2-hydroxy-3-oxobutyl phosphate.

It belongs to the DMRL synthase family. Forms an icosahedral capsid composed of 60 subunits, arranged as a dodecamer of pentamers.

It carries out the reaction (2S)-2-hydroxy-3-oxobutyl phosphate + 5-amino-6-(D-ribitylamino)uracil = 6,7-dimethyl-8-(1-D-ribityl)lumazine + phosphate + 2 H2O + H(+). Its pathway is cofactor biosynthesis; riboflavin biosynthesis; riboflavin from 2-hydroxy-3-oxobutyl phosphate and 5-amino-6-(D-ribitylamino)uracil: step 1/2. Catalyzes the formation of 6,7-dimethyl-8-ribityllumazine by condensation of 5-amino-6-(D-ribitylamino)uracil with 3,4-dihydroxy-2-butanone 4-phosphate. This is the penultimate step in the biosynthesis of riboflavin. This Methanococcus aeolicus (strain ATCC BAA-1280 / DSM 17508 / OCM 812 / Nankai-3) protein is 6,7-dimethyl-8-ribityllumazine synthase.